A 463-amino-acid polypeptide reads, in one-letter code: Glutamate--tRNA ligase (463 aa).

The short motif at 9–19 is the 'HIGH' region element; sequence PSPTGYLHVGG. Positions 115–129 are enriched in basic and acidic residues; the sequence is AGEKPRYDGTWRPEA. Positions 115 to 136 are disordered; the sequence is AGEKPRYDGTWRPEAGKTLPAI. Positions 241-245 match the 'KMSKS' region motif; the sequence is KLSKR. Residue K244 coordinates ATP.

Belongs to the class-I aminoacyl-tRNA synthetase family. Glutamate--tRNA ligase type 1 subfamily. As to quaternary structure, monomer.

It localises to the cytoplasm. The enzyme catalyses tRNA(Glu) + L-glutamate + ATP = L-glutamyl-tRNA(Glu) + AMP + diphosphate. Catalyzes the attachment of glutamate to tRNA(Glu) in a two-step reaction: glutamate is first activated by ATP to form Glu-AMP and then transferred to the acceptor end of tRNA(Glu). The polypeptide is Glutamate--tRNA ligase (Janthinobacterium sp. (strain Marseille) (Minibacterium massiliensis)).